The sequence spans 343 residues: Heme A synthase (343 aa).

The next 8 helical transmembrane spans lie at 13-33, 96-116, 130-150, 161-181, 197-217, 258-278, 294-314, and 318-338; these read VAIW…VGGA, HRLL…VFLI, AMLG…SSGL, LMTH…TALD, GWAL…ALVA, FNHR…VVLA, AVAA…MAAV, and LGVL…AFAW. His260 provides a ligand contact to heme. His322 lines the heme pocket.

Belongs to the COX15/CtaA family. Type 2 subfamily. Interacts with CtaB. Heme b is required as a cofactor.

Its subcellular location is the cell membrane. It catalyses the reaction Fe(II)-heme o + 2 A + H2O = Fe(II)-heme a + 2 AH2. It functions in the pathway porphyrin-containing compound metabolism; heme A biosynthesis; heme A from heme O: step 1/1. Catalyzes the conversion of heme O to heme A by two successive hydroxylations of the methyl group at C8. The first hydroxylation forms heme I, the second hydroxylation results in an unstable dihydroxymethyl group, which spontaneously dehydrates, resulting in the formyl group of heme A. In Caulobacter vibrioides (strain ATCC 19089 / CIP 103742 / CB 15) (Caulobacter crescentus), this protein is Heme A synthase.